We begin with the raw amino-acid sequence, 229 residues long: uncharacterized protein (229 aa).

A signal peptide spans 1–26 (MSRNDARYLRCTAALGAAFFACGAAA).

The protein belongs to the OmpW/AlkL family.

Its subcellular location is the cell outer membrane. This is an uncharacterized protein from Sinorhizobium fredii (strain NBRC 101917 / NGR234).